A 261-amino-acid polypeptide reads, in one-letter code: Cytochrome c oxidase subunit 3 (261 aa).

The Mitochondrial matrix portion of the chain corresponds to 1 to 15; sequence MAHQAHAYHMVDPSP. Residues 16–34 traverse the membrane as a helical segment; that stretch reads WPLTGAIAALLLTSGTAVW. Residues 35–40 lie on the Mitochondrial intermembrane side of the membrane; the sequence is FHFHSL. Residues 41–66 form a helical membrane-spanning segment; sequence TLLTLGNVLLLLTMYQWWRDIIREGT. The Mitochondrial matrix segment spans residues 67 to 72; the sequence is FQGHHT. A helical membrane pass occupies residues 73–105; it reads PPVQKGLRYGMILFITSEVFFFLGFFWAFYHAS. Over 106–128 the chain is Mitochondrial intermembrane; sequence LAPTPELGGCWPPTGITTLDPFE. The chain crosses the membrane as a helical span at residues 129 to 152; that stretch reads VPLLNTAVLLASGVTVTWAHHSIM. Over 153–155 the chain is Mitochondrial matrix; that stretch reads EGE. The chain crosses the membrane as a helical span at residues 156-183; sequence RKQTIQALTLTILLGFYFTFLQGMEYYE. Over 184 to 190 the chain is Mitochondrial intermembrane; it reads APFTIAD. The helical transmembrane segment at 191 to 223 threads the bilayer; that stretch reads GVYGSTFFVATGFHGLHVIIGSTFLAVCLLRQV. Topologically, residues 224 to 232 are mitochondrial matrix; that stretch reads QYHFTSEHH. Residues 233-256 form a helical membrane-spanning segment; it reads FGFEAAAWYWHFVDVVWLFLYVSI. Over 257 to 261 the chain is Mitochondrial intermembrane; the sequence is YWWGS.

It belongs to the cytochrome c oxidase subunit 3 family. Component of the cytochrome c oxidase (complex IV, CIV), a multisubunit enzyme composed of 14 subunits. The complex is composed of a catalytic core of 3 subunits MT-CO1, MT-CO2 and MT-CO3, encoded in the mitochondrial DNA, and 11 supernumerary subunits COX4I, COX5A, COX5B, COX6A, COX6B, COX6C, COX7A, COX7B, COX7C, COX8 and NDUFA4, which are encoded in the nuclear genome. The complex exists as a monomer or a dimer and forms supercomplexes (SCs) in the inner mitochondrial membrane with NADH-ubiquinone oxidoreductase (complex I, CI) and ubiquinol-cytochrome c oxidoreductase (cytochrome b-c1 complex, complex III, CIII), resulting in different assemblies (supercomplex SCI(1)III(2)IV(1) and megacomplex MCI(2)III(2)IV(2)).

It is found in the mitochondrion inner membrane. It carries out the reaction 4 Fe(II)-[cytochrome c] + O2 + 8 H(+)(in) = 4 Fe(III)-[cytochrome c] + 2 H2O + 4 H(+)(out). In terms of biological role, component of the cytochrome c oxidase, the last enzyme in the mitochondrial electron transport chain which drives oxidative phosphorylation. The respiratory chain contains 3 multisubunit complexes succinate dehydrogenase (complex II, CII), ubiquinol-cytochrome c oxidoreductase (cytochrome b-c1 complex, complex III, CIII) and cytochrome c oxidase (complex IV, CIV), that cooperate to transfer electrons derived from NADH and succinate to molecular oxygen, creating an electrochemical gradient over the inner membrane that drives transmembrane transport and the ATP synthase. Cytochrome c oxidase is the component of the respiratory chain that catalyzes the reduction of oxygen to water. Electrons originating from reduced cytochrome c in the intermembrane space (IMS) are transferred via the dinuclear copper A center (CU(A)) of subunit 2 and heme A of subunit 1 to the active site in subunit 1, a binuclear center (BNC) formed by heme A3 and copper B (CU(B)). The BNC reduces molecular oxygen to 2 water molecules using 4 electrons from cytochrome c in the IMS and 4 protons from the mitochondrial matrix. The sequence is that of Cytochrome c oxidase subunit 3 (mt-co3) from Oncorhynchus masou (Cherry salmon).